Reading from the N-terminus, the 194-residue chain is Thymidine kinase (194 aa).

ATP is bound by residues 15-22 and 88-91; these read GSMFSGKS and DEVQ. The Proton acceptor role is filled by E89. Zn(2+) contacts are provided by C145, C148, C183, and H186.

This sequence belongs to the thymidine kinase family. In terms of assembly, homotetramer.

Its subcellular location is the cytoplasm. It catalyses the reaction thymidine + ATP = dTMP + ADP + H(+). This chain is Thymidine kinase, found in Bacillus velezensis (strain DSM 23117 / BGSC 10A6 / LMG 26770 / FZB42) (Bacillus amyloliquefaciens subsp. plantarum).